The following is a 162-amino-acid chain: Ribosome maturation factor RimP (162 aa).

This sequence belongs to the RimP family.

It is found in the cytoplasm. Required for maturation of 30S ribosomal subunits. The polypeptide is Ribosome maturation factor RimP (Streptococcus gordonii (strain Challis / ATCC 35105 / BCRC 15272 / CH1 / DL1 / V288)).